A 396-amino-acid chain; its full sequence is 8-amino-7-oxononanoate synthase (396 aa).

R21 provides a ligand contact to substrate. 112–113 (GY) contacts pyridoxal 5'-phosphate. H137 is a binding site for substrate. S183, H211, and T239 together coordinate pyridoxal 5'-phosphate. K242 carries the N6-(pyridoxal phosphate)lysine modification. T358 contacts substrate.

This sequence belongs to the class-II pyridoxal-phosphate-dependent aminotransferase family. BioF subfamily. As to quaternary structure, homodimer. The cofactor is pyridoxal 5'-phosphate.

It carries out the reaction 6-carboxyhexanoyl-[ACP] + L-alanine + H(+) = (8S)-8-amino-7-oxononanoate + holo-[ACP] + CO2. It participates in cofactor biosynthesis; biotin biosynthesis. Its function is as follows. Catalyzes the decarboxylative condensation of pimeloyl-[acyl-carrier protein] and L-alanine to produce 8-amino-7-oxononanoate (AON), [acyl-carrier protein], and carbon dioxide. This is 8-amino-7-oxononanoate synthase from Bordetella petrii (strain ATCC BAA-461 / DSM 12804 / CCUG 43448).